Reading from the N-terminus, the 383-residue chain is TnpB-like protein ORF383B (383 aa).

Residues Cys-328, Cys-331, Cys-345, and Cys-348 each contribute to the Zn(2+) site.

This sequence in the N-terminal section; belongs to the transposase 2 family. The protein in the C-terminal section; belongs to the transposase 35 family.

This is TnpB-like protein ORF383B from Acidianus convivator (ATV).